A 151-amino-acid polypeptide reads, in one-letter code: UPF0178 protein CPS_3584 (151 aa).

Belongs to the UPF0178 family.

This chain is UPF0178 protein CPS_3584, found in Colwellia psychrerythraea (strain 34H / ATCC BAA-681) (Vibrio psychroerythus).